Here is a 100-residue protein sequence, read N- to C-terminus: Large ribosomal subunit protein bL21 (100 aa).

This sequence belongs to the bacterial ribosomal protein bL21 family. As to quaternary structure, part of the 50S ribosomal subunit. Contacts protein L20.

This protein binds to 23S rRNA in the presence of protein L20. This Rhodospirillum rubrum (strain ATCC 11170 / ATH 1.1.1 / DSM 467 / LMG 4362 / NCIMB 8255 / S1) protein is Large ribosomal subunit protein bL21.